A 381-amino-acid polypeptide reads, in one-letter code: 1-deoxy-D-xylulose 5-phosphate reductoisomerase (381 aa).

NADPH contacts are provided by Thr-11, Gly-12, Ser-13, Ile-14, Lys-36, Asn-37, and Asn-121. Position 122 (Lys-122) interacts with 1-deoxy-D-xylulose 5-phosphate. Position 123 (Glu-123) interacts with NADPH. Mn(2+) is bound at residue Asp-147. Residues Ser-148, Glu-149, Ser-173, and His-196 each contribute to the 1-deoxy-D-xylulose 5-phosphate site. Position 149 (Glu-149) interacts with Mn(2+). Gly-202 provides a ligand contact to NADPH. Residues Ser-209, Asn-214, Lys-215, and Glu-218 each coordinate 1-deoxy-D-xylulose 5-phosphate. Glu-218 contributes to the Mn(2+) binding site.

It belongs to the DXR family. Requires Mg(2+) as cofactor. Mn(2+) is required as a cofactor.

The catalysed reaction is 2-C-methyl-D-erythritol 4-phosphate + NADP(+) = 1-deoxy-D-xylulose 5-phosphate + NADPH + H(+). Its pathway is isoprenoid biosynthesis; isopentenyl diphosphate biosynthesis via DXP pathway; isopentenyl diphosphate from 1-deoxy-D-xylulose 5-phosphate: step 1/6. Its function is as follows. Catalyzes the NADPH-dependent rearrangement and reduction of 1-deoxy-D-xylulose-5-phosphate (DXP) to 2-C-methyl-D-erythritol 4-phosphate (MEP). This Acetivibrio thermocellus (strain ATCC 27405 / DSM 1237 / JCM 9322 / NBRC 103400 / NCIMB 10682 / NRRL B-4536 / VPI 7372) (Clostridium thermocellum) protein is 1-deoxy-D-xylulose 5-phosphate reductoisomerase.